Consider the following 336-residue polypeptide: MRIRSATPSLILLVIAIVFFVLAICTPPLANNLTLGKYGDVRFGVFGYCLNSNCSKPLVGYNSDYLDEHAKDGFRTSVIVRQRASYGLVIVPVSACICLISTIMTIFAHIGAIARSPGFFNVIGTITFFNIFITAIAFVICVITFVPHIQWPSWLVLANVGIQLIVLLLLLVARRQATRLQAKHLRRATSGSLGYNPYSLQNSSNIFSTSSRKGDLPKFSDYSAEKPMYDTISEDDGLKRGGSVSKLKPTFSNDSRSLSSYAPTVREPVPVPKSNSGFRFPFMRNKPAEQAPENPFRDPENPFKDPASAPAPNPWSINDVQANNDKKPSRFSWGRS.

Positions 232 to 336 are disordered; sequence ISEDDGLKRG…KPSRFSWGRS (105 aa). A compositionally biased stretch (polar residues) spans 250–262; sequence TFSNDSRSLSSYA.

It is found in the cytoplasm. In terms of biological role, has a role in meiosis. This chain is Meiotically up-regulated gene 33 protein (mug33), found in Schizosaccharomyces pombe (strain 972 / ATCC 24843) (Fission yeast).